The chain runs to 339 residues: Flap endonuclease 1 (339 aa).

The N-domain stretch occupies residues 1-99 (MGVNLKEIVD…VAWEKRKKHK (99 aa)). Residues D29, D81, E153, E155, D174, D176, and D237 each coordinate Mg(2+). The tract at residues 117–258 (EAIKYAKSLG…TAIEIVKRFG (142 aa)) is I-domain. Positions 329–337 (NQKTLFSFF) are interaction with PCNA.

This sequence belongs to the XPG/RAD2 endonuclease family. FEN1 subfamily. As to quaternary structure, interacts with PCNA. PCNA stimulates the nuclease activity without altering cleavage specificity. Mg(2+) serves as cofactor.

Functionally, structure-specific nuclease with 5'-flap endonuclease and 5'-3' exonuclease activities involved in DNA replication and repair. During DNA replication, cleaves the 5'-overhanging flap structure that is generated by displacement synthesis when DNA polymerase encounters the 5'-end of a downstream Okazaki fragment. Binds the unpaired 3'-DNA end and kinks the DNA to facilitate 5' cleavage specificity. Cleaves one nucleotide into the double-stranded DNA from the junction in flap DNA, leaving a nick for ligation. Also involved in the base excision repair (BER) pathway. Acts as a genome stabilization factor that prevents flaps from equilibrating into structures that lead to duplications and deletions. Also possesses 5'-3' exonuclease activity on nicked or gapped double-stranded DNA. This is Flap endonuclease 1 from Nanoarchaeum equitans (strain Kin4-M).